A 301-amino-acid chain; its full sequence is Acetylglutamate kinase (301 aa).

Substrate is bound by residues 76 to 77, R98, and N192; that span reads GG.

The protein belongs to the acetylglutamate kinase family. ArgB subfamily.

It is found in the cytoplasm. It catalyses the reaction N-acetyl-L-glutamate + ATP = N-acetyl-L-glutamyl 5-phosphate + ADP. It participates in amino-acid biosynthesis; L-arginine biosynthesis; N(2)-acetyl-L-ornithine from L-glutamate: step 2/4. Its function is as follows. Catalyzes the ATP-dependent phosphorylation of N-acetyl-L-glutamate. The polypeptide is Acetylglutamate kinase (Chlorobaculum parvum (strain DSM 263 / NCIMB 8327) (Chlorobium vibrioforme subsp. thiosulfatophilum)).